The following is a 354-amino-acid chain: Uroporphyrinogen decarboxylase (354 aa).

Substrate is bound by residues 27–31, D77, Y154, S209, and H327; that span reads RQAGR.

This sequence belongs to the uroporphyrinogen decarboxylase family. As to quaternary structure, homodimer.

It is found in the cytoplasm. The catalysed reaction is uroporphyrinogen III + 4 H(+) = coproporphyrinogen III + 4 CO2. It functions in the pathway porphyrin-containing compound metabolism; protoporphyrin-IX biosynthesis; coproporphyrinogen-III from 5-aminolevulinate: step 4/4. Functionally, catalyzes the decarboxylation of four acetate groups of uroporphyrinogen-III to yield coproporphyrinogen-III. This Shewanella halifaxensis (strain HAW-EB4) protein is Uroporphyrinogen decarboxylase.